A 452-amino-acid chain; its full sequence is Phosphatidylinositol N-acetylglucosaminyltransferase GPI3 subunit (452 aa).

Residues 407–427 form a helical membrane-spanning segment; it reads LYLLCGIVEYMLFFLLEWLYP.

This sequence belongs to the glycosyltransferase group 1 family. In terms of assembly, component of the phosphatidylinositol N-acetylglucosaminyltransferase complex composed of at least GPI1, GPI2, GPI3, GPI15, GPI19 and ERI1.

It is found in the endoplasmic reticulum membrane. The enzyme catalyses a 1,2-diacyl-sn-glycero-3-phospho-(1D-myo-inositol) + UDP-N-acetyl-alpha-D-glucosamine = a 6-(N-acetyl-alpha-D-glucosaminyl)-1-(1,2-diacyl-sn-glycero-3-phospho)-1D-myo-inositol + UDP + H(+). It functions in the pathway glycolipid biosynthesis; glycosylphosphatidylinositol-anchor biosynthesis. With respect to regulation, inhibited by Ras, probably via the interaction between RAS2 and ERI1. Catalytic subunit in the complex catalyzing the transfer of N-acetylglucosamine from UDP-N-acetylglucosamine to phosphatidylinositol, the first step of GPI biosynthesis. The chain is Phosphatidylinositol N-acetylglucosaminyltransferase GPI3 subunit (SPT14) from Saccharomyces cerevisiae (strain RM11-1a) (Baker's yeast).